The primary structure comprises 403 residues: Tripartite motif-containing protein 59 (403 aa).

An RING-type zinc finger spans residues 10–60; that stretch reads CPICYSIFEDPRVLPCSHTFCRNCLENILQASGNFYIWRPLRIPLKCPNCR. The B box-type zinc-finger motif lies at 92-134; it reads PDIVTCPEHYRQPLNVYCLLDKKLVCGHCLTIGQHHGHPIDDL. The Zn(2+) site is built by cysteine 97, histidine 100, cysteine 120, and histidine 126. Residues 163–246 are a coiled coil; the sequence is LIEKLKEQKS…ALTISLQEES (84 aa). A helical membrane pass occupies residues 329–349; it reads ILNIVVVTLISVILMSILFFN.

It belongs to the TRIM/RBCC family. As to quaternary structure, interacts with ECSIT.

The protein resides in the endoplasmic reticulum membrane. The catalysed reaction is S-ubiquitinyl-[E2 ubiquitin-conjugating enzyme]-L-cysteine + [acceptor protein]-L-lysine = [E2 ubiquitin-conjugating enzyme]-L-cysteine + N(6)-ubiquitinyl-[acceptor protein]-L-lysine.. The protein operates within protein modification; protein ubiquitination. E3 ubiquitin ligase involved in different processes such as development and immune response. Serves as a negative regulator for innate immune signaling pathways by suppressing RLR-induced activation of IRF3/7 and NF-kappa-B via interaction with adapter ECSIT. Regulates autophagy through modulating both the transcription and the ubiquitination of BECN1. On the one hand, regulates the transcription of BECN1 through negatively modulating the NF-kappa-B pathway. On the other hand, regulates TRAF6-mediated 'Lys-63'-linked ubiquitination of BECN1, thus affecting the formation of the BECN1-PIK3C3 complex. In addition, mediates 'Lys-48'-linked ubiquitination of TRAF6 and thereby promotes TRAF6 proteasomal degradation. Also acts as a critical regulator for early embryo development from blastocyst stage to gastrula through modulating F-actin assembly and WASH1 'Lys-63'-linked ubiquitination. This is Tripartite motif-containing protein 59 (TRIM59) from Homo sapiens (Human).